A 230-amino-acid chain; its full sequence is Orotate phosphoribosyltransferase (230 aa).

Residues R107, K108, K111, H113, and 133 to 141 (EDLTTAGGS) each bind 5-phospho-alpha-D-ribose 1-diphosphate. T137 is a binding site for orotate.

It belongs to the purine/pyrimidine phosphoribosyltransferase family. PyrE subfamily. As to quaternary structure, homodimer. Requires Mg(2+) as cofactor.

It carries out the reaction orotidine 5'-phosphate + diphosphate = orotate + 5-phospho-alpha-D-ribose 1-diphosphate. Its pathway is pyrimidine metabolism; UMP biosynthesis via de novo pathway; UMP from orotate: step 1/2. Functionally, catalyzes the transfer of a ribosyl phosphate group from 5-phosphoribose 1-diphosphate to orotate, leading to the formation of orotidine monophosphate (OMP). The sequence is that of Orotate phosphoribosyltransferase from Allorhizobium ampelinum (strain ATCC BAA-846 / DSM 112012 / S4) (Agrobacterium vitis (strain S4)).